Consider the following 143-residue polypeptide: MFGRISTRALLRPAFTHRIPSVSLSRFLSTETKQAIESAIESAPVVLFMKGTPEFPQCGFSKATINMLGQQGVDPMKFAAYNVLEDAELREGVKEFSEWPTIPQLYVNKEFVGGCDIVMNMAQTGELAKLLEDADALVPEEEE.

Residues 1-28 constitute a mitochondrion transit peptide; that stretch reads MFGRISTRALLRPAFTHRIPSVSLSRFL. A Glutaredoxin domain is found at 33-138; sequence KQAIESAIES…KLLEDADALV (106 aa). Lysine 50 contacts glutathione. Cysteine 58 contacts [2Fe-2S] cluster. Residues 90–94, isoleucine 102, and 115–116 each bind glutathione; these read REGVK and CD.

It belongs to the glutaredoxin family. Monothiol subfamily. Homodimer.

The protein localises to the mitochondrion matrix. In terms of biological role, monothiol glutaredoxin involved in mitochondrial iron-sulfur (Fe/S) cluster transfer. Receives iron-sulfur clusters from scaffold protein ISU1 and mediates their transfer to apoproteins, to the 4Fe/FS cluster biosynthesis machinery, or export from mitochondrion. The chain is Monothiol glutaredoxin-5, mitochondrial (GRX5) from Lachancea kluyveri (Yeast).